An 806-amino-acid chain; its full sequence is Lon protease (806 aa).

The region spanning 13-206 (LPMMPIRDVV…RVAEMLDIEI (194 aa)) is the Lon N-terminal domain. 356–363 (GPPGVGKT) is a binding site for ATP. A Lon proteolytic domain is found at 599-780 (KNEIGAATGL…DEVLKIALER (182 aa)). Active-site residues include Ser686 and Lys729.

Belongs to the peptidase S16 family. In terms of assembly, homohexamer. Organized in a ring with a central cavity.

The protein resides in the cytoplasm. It carries out the reaction Hydrolysis of proteins in presence of ATP.. In terms of biological role, ATP-dependent serine protease that mediates the selective degradation of mutant and abnormal proteins as well as certain short-lived regulatory proteins. Required for cellular homeostasis and for survival from DNA damage and developmental changes induced by stress. Degrades polypeptides processively to yield small peptide fragments that are 5 to 10 amino acids long. Binds to DNA in a double-stranded, site-specific manner. The sequence is that of Lon protease from Solibacter usitatus (strain Ellin6076).